A 415-amino-acid polypeptide reads, in one-letter code: MAWPKVQPEVNIGVVGHVDHGKTTLVQAITGIWTSKHSEELKRGMTIKLGYAETNIGVCESCKKPEAYVTEPSCKSCGSDDEPKFLRRISFIDAPGHEVLMATMLSGAALMDGAILVVAANEPFPQPQTREHFVALGIIGVKNLIIVQNKVDVVSKEEALSQYRQIKQFTKGTWAENVPIIPVSALHKINIDSLIEGIEEYIKTPYRDLSQKPVMLVIRSFDVNKPGTQFNELKGGVIGGSIIQGLFKVDQEIKVLPGLRVEKQGKVSYEPIFTKISSIRFGDEEFKEAKPGGLVAIGTYLDPSLTKADNLLGSIITLADAEVPVLWNIRIKYNLLERVVGAKEMLKVDPIRAKETLMLSVGSSTTLGIVTSVKKDEIEVELRRPVAVWSNNIRTVISRQIAGRWRMIGWGLVEI.

Residues 7 to 206 (QPEVNIGVVG…GIEEYIKTPY (200 aa)) enclose the tr-type G domain. The tract at residues 16–23 (GHVDHGKT) is G1. Residues Asp19, Thr23, Gly44, and Thr46 each contribute to the Mg(2+) site. Residue 19-24 (DHGKTT) coordinates GTP. The interval 44 to 48 (GMTIK) is G2. The Zn(2+) site is built by Cys59, Cys62, Cys74, and Cys77. The segment at 93–96 (DAPG) is G3. GTP contacts are provided by residues 149 to 152 (NKVD) and 184 to 186 (SAL). The G4 stretch occupies residues 149–152 (NKVD). The segment at 184 to 186 (SAL) is G5.

This sequence belongs to the TRAFAC class translation factor GTPase superfamily. Classic translation factor GTPase family. EIF2G subfamily. In terms of assembly, heterotrimer composed of an alpha, a beta and a gamma chain. Mg(2+) serves as cofactor.

It carries out the reaction GTP + H2O = GDP + phosphate + H(+). EIF-2 functions in the early steps of protein synthesis by forming a ternary complex with GTP and initiator tRNA. This is Translation initiation factor 2 subunit gamma from Saccharolobus solfataricus (strain ATCC 35092 / DSM 1617 / JCM 11322 / P2) (Sulfolobus solfataricus).